A 99-amino-acid polypeptide reads, in one-letter code: Acylphosphatase (99 aa).

Positions 14-99 (AVDVTVTGRV…DQGLRSFGVR (86 aa)) constitute an Acylphosphatase-like domain. Catalysis depends on residues Arg29 and Asn47.

Belongs to the acylphosphatase family.

The catalysed reaction is an acyl phosphate + H2O = a carboxylate + phosphate + H(+). This Nocardioides sp. (strain ATCC BAA-499 / JS614) protein is Acylphosphatase (acyP).